Reading from the N-terminus, the 327-residue chain is Cobalamin biosynthesis protein CobD (327 aa).

4 helical membrane-spanning segments follow: residues 61 to 78 (MWLTVGLVAACIFAGLVI), 80 to 102 (SILPHAGTAGAIAEVVIVAILLA), 160 to 182 (GIVAPAFWFLVGGLPGLFAYKFI), and 300 to 322 (AALVLFWSTMSLMTGLVIAASLV).

Belongs to the CobD/CbiB family.

It is found in the cell membrane. Its pathway is cofactor biosynthesis; adenosylcobalamin biosynthesis. Converts cobyric acid to cobinamide by the addition of aminopropanol on the F carboxylic group. The polypeptide is Cobalamin biosynthesis protein CobD (Brucella melitensis biotype 1 (strain ATCC 23456 / CCUG 17765 / NCTC 10094 / 16M)).